Reading from the N-terminus, the 338-residue chain is Sorting nexin-15 (338 aa).

Positions 1 to 131 constitute a PX domain; it reads MSRRAKKDDF…EFFRGGEVTR (131 aa). A 1,2-diacyl-sn-glycero-3-phospho-(1D-myo-inositol-3-phosphate) is bound by residues R52, S54, R88, and R97. Residue R106 is modified to Omega-N-methylarginine. Positions 134–155 are disordered; sequence EVSRDLQILPPPLIPTPPSDEA. Residues 142–151 show a composition bias toward pro residues; sequence LPPPLIPTPP. Residues S202 and S228 each carry the phosphoserine modification. Residues 240-270 are disordered; it reads VQSKRLDQEPWEPGGREEEEAEDGDPAPAYL. Residues 266–338 enclose the MIT domain; that stretch reads APAYLGQATE…RAETLHAHLP (73 aa).

This sequence belongs to the sorting nexin family. In terms of assembly, homodimer. Interacts with SNX1, SNX2 and SNX4.

It is found in the cytoplasm. The protein resides in the membrane. Its subcellular location is the cytoplasmic vesicle membrane. Its function is as follows. May be involved in several stages of intracellular trafficking. Overexpression of SNX15 disrupts the normal trafficking of proteins from the plasma membrane to recycling endosomes or the TGN. This Rattus norvegicus (Rat) protein is Sorting nexin-15 (Snx15).